Consider the following 250-residue polypeptide: MFEIIPILAFEDNYIWLLHQHGHALVVDPGDAHPVLEILDARGLQLRAILVTHHHQDHTGGVEELIQATSAQVFAPAKEQFSFPHHPVTAGDRLDIPGIALSLSVLDVPGHTVGHVAYYGDGMLFSGDTLFGAGCGRLFEGTPGQMYSSLQQLAQLPVNTRVYCGHEYTERNLAFALSLEPHHEALLSRREATAALRAQGLPSLPSSMALELATNPFLRCHEPGIIAASKSAATDPVSVFAAIREMRNHF.

Zn(2+)-binding residues include H53, H55, D57, H58, H111, D128, and H166.

This sequence belongs to the metallo-beta-lactamase superfamily. Glyoxalase II family. As to quaternary structure, monomer. The cofactor is Zn(2+).

It carries out the reaction an S-(2-hydroxyacyl)glutathione + H2O = a 2-hydroxy carboxylate + glutathione + H(+). Its pathway is secondary metabolite metabolism; methylglyoxal degradation; (R)-lactate from methylglyoxal: step 2/2. Thiolesterase that catalyzes the hydrolysis of S-D-lactoyl-glutathione to form glutathione and D-lactic acid. This chain is Hydroxyacylglutathione hydrolase, found in Methylobacillus flagellatus (strain ATCC 51484 / DSM 6875 / VKM B-1610 / KT).